We begin with the raw amino-acid sequence, 81 residues long: Sulfur carrier protein TusA (81 aa).

Residue C19 is the Cysteine persulfide intermediate of the active site.

The protein belongs to the sulfur carrier protein TusA family. Interacts with IscS.

The protein localises to the cytoplasm. Its pathway is tRNA modification. Sulfur carrier protein involved in sulfur trafficking in the cell. Part of a sulfur-relay system required for 2-thiolation during synthesis of 2-thiouridine of the modified wobble base 5-methylaminomethyl-2-thiouridine (mnm(5)s(2)U) in tRNA. Interacts with IscS and stimulates its cysteine desulfurase activity. Accepts an activated sulfur from IscS, which is then transferred to TusD, and thus determines the direction of sulfur flow from IscS to 2-thiouridine formation. Also appears to be involved in sulfur transfer for the biosynthesis of molybdopterin. The sequence is that of Sulfur carrier protein TusA from Escherichia coli (strain SMS-3-5 / SECEC).